Consider the following 425-residue polypeptide: Serine hydroxymethyltransferase 2 (425 aa).

(6S)-5,6,7,8-tetrahydrofolate-binding positions include L121 and 125–127; that span reads GHL. The residue at position 230 (K230) is an N6-(pyridoxal phosphate)lysine.

It belongs to the SHMT family. As to quaternary structure, homodimer. Pyridoxal 5'-phosphate serves as cofactor.

The protein resides in the cytoplasm. It catalyses the reaction (6R)-5,10-methylene-5,6,7,8-tetrahydrofolate + glycine + H2O = (6S)-5,6,7,8-tetrahydrofolate + L-serine. It participates in one-carbon metabolism; tetrahydrofolate interconversion. It functions in the pathway amino-acid biosynthesis; glycine biosynthesis; glycine from L-serine: step 1/1. Its function is as follows. Catalyzes the reversible interconversion of serine and glycine with tetrahydrofolate (THF) serving as the one-carbon carrier. This reaction serves as the major source of one-carbon groups required for the biosynthesis of purines, thymidylate, methionine, and other important biomolecules. Also exhibits THF-independent aldolase activity toward beta-hydroxyamino acids, producing glycine and aldehydes, via a retro-aldol mechanism. The protein is Serine hydroxymethyltransferase 2 of Mycobacterium bovis (strain ATCC BAA-935 / AF2122/97).